Here is a 156-residue protein sequence, read N- to C-terminus: MQANRSQDDLVKTFKAILKEERFGSQSEIVLALQAEGYGNINQSKVSRMLSKFGAVRTRNAKQEMVYCLPAELGVPTAGSPLKNLVLDVDHNQSMIVVRTSPGAAQLIARLLDSIGKPEGILGTIAGDDTIFITPSNIHEIDKTLDTVKSLFNFND.

The protein belongs to the ArgR family.

The protein resides in the cytoplasm. It participates in amino-acid biosynthesis; L-arginine biosynthesis [regulation]. In terms of biological role, regulates arginine biosynthesis genes. The protein is Arginine repressor of Shewanella sediminis (strain HAW-EB3).